A 308-amino-acid polypeptide reads, in one-letter code: Homoserine kinase (308 aa).

94-104 provides a ligand contact to ATP; it reads PLARGLGSSAT.

This sequence belongs to the GHMP kinase family. Homoserine kinase subfamily.

It is found in the cytoplasm. The catalysed reaction is L-homoserine + ATP = O-phospho-L-homoserine + ADP + H(+). It participates in amino-acid biosynthesis; L-threonine biosynthesis; L-threonine from L-aspartate: step 4/5. Its function is as follows. Catalyzes the ATP-dependent phosphorylation of L-homoserine to L-homoserine phosphate. The chain is Homoserine kinase from Crocosphaera subtropica (strain ATCC 51142 / BH68) (Cyanothece sp. (strain ATCC 51142)).